A 239-amino-acid chain; its full sequence is Probable transcriptional regulatory protein Bcer98_0465 (239 aa).

It belongs to the TACO1 family. YeeN subfamily.

It is found in the cytoplasm. This Bacillus cytotoxicus (strain DSM 22905 / CIP 110041 / 391-98 / NVH 391-98) protein is Probable transcriptional regulatory protein Bcer98_0465.